We begin with the raw amino-acid sequence, 258 residues long: Cytolethal distending toxin subunit A (258 aa).

The signal sequence occupies residues methionine 1 to glycine 21. Cysteine 22 is lipidated: N-palmitoyl cysteine. Cysteine 22 is lipidated: S-diacylglycerol cysteine. The tract at residues valine 40–isoleucine 71 is disordered. Over residues valine 46 to alanine 62 the composition is skewed to pro residues. Residues tryptophan 93 to tyrosine 104 are mediates binding to target cells. A Ricin B-type lectin domain is found at arginine 125 to isoleucine 223. The disordered stretch occupies residues lysine 236–glutamine 258. Residues proline 249 to glutamine 258 are compositionally biased toward basic and acidic residues.

Heterotrimer of 3 subunits, CdtA, CdtB and CdtC.

It is found in the cell outer membrane. Its function is as follows. CDTs are cytotoxins which induce host cell distension, growth arrest in G2/M phase, nucleus swelling, and chromatin fragmentation in HeLa cells. CdtA, along with CdtC, probably forms a heterodimeric subunit required for the delivery of CdtB. This chain is Cytolethal distending toxin subunit A (cdtA), found in Escherichia coli.